We begin with the raw amino-acid sequence, 258 residues long: Small ribosomal subunit protein uS3 (258 aa).

One can recognise a KH type-2 domain in the interval 43 to 111; the sequence is IRKLMSTGLE…QVQLNILEVK (69 aa). Positions 217 to 258 are disordered; that stretch reads AREQASAAPRARGRADRPRGRRDEGAAPQQAAAPAATTGTEA. Residues 229–241 show a composition bias toward basic and acidic residues; it reads GRADRPRGRRDEG. The span at 242–258 shows a compositional bias: low complexity; it reads AAPQQAAAPAATTGTEA.

The protein belongs to the universal ribosomal protein uS3 family. As to quaternary structure, part of the 30S ribosomal subunit. Forms a tight complex with proteins S10 and S14.

Functionally, binds the lower part of the 30S subunit head. Binds mRNA in the 70S ribosome, positioning it for translation. In Beutenbergia cavernae (strain ATCC BAA-8 / DSM 12333 / CCUG 43141 / JCM 11478 / NBRC 16432 / NCIMB 13614 / HKI 0122), this protein is Small ribosomal subunit protein uS3.